The following is a 546-amino-acid chain: Chaperonin GroEL (546 aa).

Residues 29-32 (TMGP), Lys50, 86-90 (DGTTT), Gly414, and Asp492 each bind ATP.

Belongs to the chaperonin (HSP60) family. As to quaternary structure, forms a cylinder of 14 subunits composed of two heptameric rings stacked back-to-back. Interacts with the co-chaperonin GroES.

It is found in the cytoplasm. The enzyme catalyses ATP + H2O + a folded polypeptide = ADP + phosphate + an unfolded polypeptide.. Together with its co-chaperonin GroES, plays an essential role in assisting protein folding. The GroEL-GroES system forms a nano-cage that allows encapsulation of the non-native substrate proteins and provides a physical environment optimized to promote and accelerate protein folding. The protein is Chaperonin GroEL of Helicobacter pylori (strain J99 / ATCC 700824) (Campylobacter pylori J99).